Here is an 89-residue protein sequence, read N- to C-terminus: Mitochondrial import inner membrane translocase subunit Tim9 (89 aa).

The residue at position 2 (alanine 2) is an N-acetylalanine. Positions 28–52 (CFLDCVKDFTTREVKPEEVTCSEHC) match the Twin CX3C motif motif. 2 cysteine pairs are disulfide-bonded: cysteine 28-cysteine 52 and cysteine 32-cysteine 48.

It belongs to the small Tim family. Heterohexamer; composed of 3 copies of TIMM9 and 3 copies of TIMM10/TIM10A, named soluble 70 kDa complex. The complex forms a 6-bladed alpha-propeller structure and associates with the TIMM22 component of the TIM22 complex. Interacts with multi-pass transmembrane proteins in transit. Also forms a complex composed of TIMM9, TIMM10/TIM10A and FXC1/TIM10B.

It localises to the mitochondrion inner membrane. Functionally, mitochondrial intermembrane chaperone that participates in the import and insertion of multi-pass transmembrane proteins into the mitochondrial inner membrane. May also be required for the transfer of beta-barrel precursors from the TOM complex to the sorting and assembly machinery (SAM complex) of the outer membrane. Acts as a chaperone-like protein that protects the hydrophobic precursors from aggregation and guide them through the mitochondrial intermembrane space. The chain is Mitochondrial import inner membrane translocase subunit Tim9 (Timm9) from Mus musculus (Mouse).